The sequence spans 248 residues: MERASLIQKAKLAEQAERYEDMAAFMKGAVEKGEELSCEERNLLSVAYKNVVGGQRAAWRVLSSIEQKSNEEGSEEKGPEVREYREKVETELQGVCDTVLGLLDSHLIKEAGDAESRVFYLKMKGDYYRYLAEVATGDDKKRIIDSARSAYQEAMDISKKEMPPTNPIRLGLALNFSVFHYEIANSPEEAISLAKTTFDEAMADLHTLSEDSYKDSTLIMQLLRDNLTLWTADNAGEEGGEAPQEPQS.

Residues serine 5, serine 74, and serine 248 each carry the phosphoserine modification.

This sequence belongs to the 14-3-3 family. As to quaternary structure, homodimer. Interacts with KRT17 and SAMSN1. Found in a complex with XPO7, EIF4A1, ARHGAP1, VPS26A, VPS29 and VPS35. Interacts with GAB2. Interacts with SRPK2. Interacts with COPS6. Interacts with COP1; this interaction leads to proteasomal degradation. Interacts with the 'Thr-369' phosphorylated form of DAPK2. Interacts with PI4KB. Interacts with SLITRK1. Interacts with LRRK2; this interaction is dependent on LRRK2 phosphorylation. Interacts with PKP3 (via N-terminus); the interaction maintains the cytoplasmic pool of PKP3, facilitates PKP3 exchange at desmosomes and restricts PKP3 localization to existing desmosome cell junctions. Interacts with LCP2. Post-translationally, ubiquitinated. Ubiquitination by RFFL induces proteasomal degradation and indirectly regulates p53/TP53 activation. As to expression, present mainly in tissues enriched in stratified squamous keratinizing epithelium.

The protein resides in the cytoplasm. It localises to the nucleus. It is found in the secreted. Adapter protein implicated in the regulation of a large spectrum of both general and specialized signaling pathways. Binds to a large number of partners, usually by recognition of a phosphoserine or phosphothreonine motif. Binding generally results in the modulation of the activity of the binding partner. Promotes cytosolic retention of GBP1 GTPase by binding to phosphorylated GBP1, thereby inhibiting the innate immune response. Also acts as a TP53/p53-regulated inhibitor of G2/M progression. When bound to KRT17, regulates protein synthesis and epithelial cell growth by stimulating Akt/mTOR pathway. Acts to maintain desmosome cell junction adhesion in epithelial cells via interacting with and sequestering PKP3 to the cytoplasm, thereby restricting its translocation to existing desmosome structures and therefore maintaining desmosome protein homeostasis. Also acts to facilitate PKP3 exchange at desmosome plaques, thereby maintaining keratinocyte intercellular adhesion. May also regulate MDM2 autoubiquitination and degradation and thereby activate p53/TP53. This Homo sapiens (Human) protein is 14-3-3 protein sigma (SFN).